We begin with the raw amino-acid sequence, 537 residues long: MAKFVFVTGGVVSSLGKGITAASLGRLLKSRGLKVAIQKLDPYINVDPGTMSPYQHGEVFVTEDGAETDLDLGHYERFIDINISRSCNVTTGGIYAAVINKERRGEYLGGTVQVIPHITNEIKERVLSVADDSLADVVITEIGGTVGDIESQPFLEAIRQLKGDLGRGNVVYIHVTLVPYLRAANELKTKPTQHSVKELRSMGIKPDIIVCRSELPLSKEMEEKLALFCDVEKEAVIQALDAPSIYEVPLMLEEEGLADIVLDKLGIKTGPPDLADWREMVERMKNLRYLTTIALVGKYVSLQDAYLSVAEALRHAGFYHGSAIEIKWINSEEVNCANTEDLLGSADGILVPGGFGDRGIEGKIEAIRFARERGIPFFGLCLGMQLAVVEFSRNVIGWRGANSTEFDPYTPYPVIDLLPEQRQLSDKGGTMRLGSYPCKLVPGTLAYRAYKKEIVEERHRHRYELNNAYRADLAAKGLVFSGTLPDGYLVEIIELPGHPWFLATQFHPEFKSRPNRPHPLFRDFIGAARKYKESRYS.

The segment at 1 to 267 is amidoligase domain; that stretch reads MAKFVFVTGG…ADIVLDKLGI (267 aa). S13 serves as a coordination point for CTP. S13 contacts UTP. Residue 14–19 coordinates ATP; that stretch reads SLGKGI. Y54 is a binding site for L-glutamine. ATP is bound at residue D71. Mg(2+)-binding residues include D71 and E141. CTP-binding positions include 148–150, 188–193, and K224; these read DIE and KTKPTQ. UTP contacts are provided by residues 188–193 and K224; that span reads KTKPTQ. Residues 292-534 enclose the Glutamine amidotransferase type-1 domain; that stretch reads TIALVGKYVS…IGAARKYKES (243 aa). G354 serves as a coordination point for L-glutamine. C381 acts as the Nucleophile; for glutamine hydrolysis in catalysis. L-glutamine-binding positions include 382-385, E405, and R462; that span reads LGMQ. Catalysis depends on residues H507 and E509.

The protein belongs to the CTP synthase family. Homotetramer.

The enzyme catalyses UTP + L-glutamine + ATP + H2O = CTP + L-glutamate + ADP + phosphate + 2 H(+). It catalyses the reaction L-glutamine + H2O = L-glutamate + NH4(+). It carries out the reaction UTP + NH4(+) + ATP = CTP + ADP + phosphate + 2 H(+). Its pathway is pyrimidine metabolism; CTP biosynthesis via de novo pathway; CTP from UDP: step 2/2. Its activity is regulated as follows. Allosterically activated by GTP, when glutamine is the substrate; GTP has no effect on the reaction when ammonia is the substrate. The allosteric effector GTP functions by stabilizing the protein conformation that binds the tetrahedral intermediate(s) formed during glutamine hydrolysis. Inhibited by the product CTP, via allosteric rather than competitive inhibition. Its function is as follows. Catalyzes the ATP-dependent amination of UTP to CTP with either L-glutamine or ammonia as the source of nitrogen. Regulates intracellular CTP levels through interactions with the four ribonucleotide triphosphates. In Pelotomaculum thermopropionicum (strain DSM 13744 / JCM 10971 / SI), this protein is CTP synthase.